The sequence spans 236 residues: Phosphoribosylaminoimidazole-succinocarboxamide synthase (236 aa).

Belongs to the SAICAR synthetase family.

The enzyme catalyses 5-amino-1-(5-phospho-D-ribosyl)imidazole-4-carboxylate + L-aspartate + ATP = (2S)-2-[5-amino-1-(5-phospho-beta-D-ribosyl)imidazole-4-carboxamido]succinate + ADP + phosphate + 2 H(+). Its pathway is purine metabolism; IMP biosynthesis via de novo pathway; 5-amino-1-(5-phospho-D-ribosyl)imidazole-4-carboxamide from 5-amino-1-(5-phospho-D-ribosyl)imidazole-4-carboxylate: step 1/2. This Pseudomonas putida (strain ATCC 700007 / DSM 6899 / JCM 31910 / BCRC 17059 / LMG 24140 / F1) protein is Phosphoribosylaminoimidazole-succinocarboxamide synthase.